We begin with the raw amino-acid sequence, 337 residues long: Zinc finger protein Gfi-1b (337 aa).

Residues 1–20 (MPRSFLVKSKKAHTYHQHRF) are mediates repression of transcription. Positions 1 to 20 (MPRSFLVKSKKAHTYHQHRF) are SNAG domain. C2H2-type zinc fingers lie at residues 170–193 (YHCV…RRSH), 199–221 (FACE…TNIH), 227–249 (FECK…LLIH), 255–277 (YPCQ…TYIH), 283–305 (HKCQ…SRKH), and 311–334 (FSCE…ETQH).

As to expression, expressed in erythroid cells of primitive and definitive lineage and bone marrow cells.

The protein localises to the nucleus. In terms of biological role, essential transcriptional regulator necessary for development and differentiation of erythroid and megakaryocytic lineages. Alters histone methylation by recruiting histone methyltransferase to target genes promoters. Plays a role in heterochromatin formation. The polypeptide is Zinc finger protein Gfi-1b (GFI1B) (Gallus gallus (Chicken)).